A 248-amino-acid chain; its full sequence is uncharacterized protein (248 aa).

Belongs to the glycosyltransferase 2 family.

This is an uncharacterized protein from Acanthamoeba polyphaga (Amoeba).